The sequence spans 194 residues: Putative manganese efflux pump MntP (194 aa).

The next 6 helical transmembrane spans lie at 3-23, 40-60, 65-85, 109-129, 134-154, and 169-189; these read FYAT…VAVC, GFIF…LGLY, IIQW…GRMI, LIAT…GLAF, IVHT…LGML, and IIGG…HLDL.

It belongs to the MntP (TC 9.B.29) family.

The protein localises to the cell inner membrane. Its function is as follows. Probably functions as a manganese efflux pump. The sequence is that of Putative manganese efflux pump MntP from Proteus mirabilis (strain HI4320).